The sequence spans 433 residues: Adenosylhomocysteinase A (433 aa).

The substrate site is built by Thr-57, Asp-132, Glu-157, Lys-187, and Asp-191. Residues 184 to 351 are NAD binding; that stretch reads SVTKSKFDNL…EGRLVNLGCA (168 aa).

Belongs to the adenosylhomocysteinase family. Homotetramer. It depends on NAD(+) as a cofactor.

It is found in the cytoplasm. The enzyme catalyses S-adenosyl-L-homocysteine + H2O = L-homocysteine + adenosine. It participates in amino-acid biosynthesis; L-homocysteine biosynthesis; L-homocysteine from S-adenosyl-L-homocysteine: step 1/1. Its function is as follows. Catalyzes the hydrolysis of S-adenosyl-L-homocysteine to form adenosine and homocysteine. Binds copper ions. This Xenopus laevis (African clawed frog) protein is Adenosylhomocysteinase A (ahcy-a).